A 241-amino-acid chain; its full sequence is Phosphoribosylformylglycinamidine synthase subunit PurQ (241 aa).

One can recognise a Glutamine amidotransferase type-1 domain in the interval Asn6–Ala241. Cys90 serves as the catalytic Nucleophile. Catalysis depends on residues His207 and Glu209.

As to quaternary structure, part of the FGAM synthase complex composed of 1 PurL, 1 PurQ and 2 PurS subunits.

It localises to the cytoplasm. The catalysed reaction is N(2)-formyl-N(1)-(5-phospho-beta-D-ribosyl)glycinamide + L-glutamine + ATP + H2O = 2-formamido-N(1)-(5-O-phospho-beta-D-ribosyl)acetamidine + L-glutamate + ADP + phosphate + H(+). It catalyses the reaction L-glutamine + H2O = L-glutamate + NH4(+). The protein operates within purine metabolism; IMP biosynthesis via de novo pathway; 5-amino-1-(5-phospho-D-ribosyl)imidazole from N(2)-formyl-N(1)-(5-phospho-D-ribosyl)glycinamide: step 1/2. Functionally, part of the phosphoribosylformylglycinamidine synthase complex involved in the purines biosynthetic pathway. Catalyzes the ATP-dependent conversion of formylglycinamide ribonucleotide (FGAR) and glutamine to yield formylglycinamidine ribonucleotide (FGAM) and glutamate. The FGAM synthase complex is composed of three subunits. PurQ produces an ammonia molecule by converting glutamine to glutamate. PurL transfers the ammonia molecule to FGAR to form FGAM in an ATP-dependent manner. PurS interacts with PurQ and PurL and is thought to assist in the transfer of the ammonia molecule from PurQ to PurL. The protein is Phosphoribosylformylglycinamidine synthase subunit PurQ of Thermosynechococcus vestitus (strain NIES-2133 / IAM M-273 / BP-1).